A 232-amino-acid polypeptide reads, in one-letter code: Enterobactin synthase component D (232 aa).

Mg(2+) is bound by residues D106, E108, and E150.

It belongs to the P-Pant transferase superfamily. EntD family. EntB, EntD, EntE, and EntF form a multienzyme complex called enterobactin synthase. The cofactor is Mg(2+).

The protein resides in the membrane. It carries out the reaction apo-[aryl-carrier protein] + CoA = holo-[aryl-carrier protein] + adenosine 3',5'-bisphosphate + H(+). It catalyses the reaction apo-[peptidyl-carrier protein] + CoA = holo-[peptidyl-carrier protein] + adenosine 3',5'-bisphosphate + H(+). It functions in the pathway siderophore biosynthesis; enterobactin biosynthesis. Involved in the biosynthesis of the siderophore enterobactin (enterochelin), which is a macrocyclic trimeric lactone of N-(2,3-dihydroxybenzoyl)-serine. The serine trilactone serves as a scaffolding for the three catechol functionalities that provide hexadentate coordination for the tightly ligated iron(2+) atoms. Plays an essential role in the assembly of the enterobactin by catalyzing the transfer of the 4'-phosphopantetheine (Ppant) moiety from coenzyme A to the apo-domains of both EntB (ArCP domain) and EntF (PCP domain) to yield their holo-forms which make them competent for the activation of 2,3-dihydroxybenzoate (DHB) and L-serine, respectively. This is Enterobactin synthase component D from Salmonella austin.